The primary structure comprises 79 residues: RNA-binding protein Hfq (79 aa).

Residues 10 to 70 enclose the Sm domain; sequence DVFLKTVRKQ…ISTIMPGQPI (61 aa).

Belongs to the Hfq family. As to quaternary structure, homohexamer.

In terms of biological role, RNA chaperone that binds small regulatory RNA (sRNAs) and mRNAs to facilitate mRNA translational regulation in response to envelope stress, environmental stress and changes in metabolite concentrations. Also binds with high specificity to tRNAs. This is RNA-binding protein Hfq from Bartonella bacilliformis (strain ATCC 35685 / KC583 / Herrer 020/F12,63).